A 158-amino-acid polypeptide reads, in one-letter code: Acireductone dioxygenase (158 aa).

4 residues coordinate Fe(2+): His-81, His-83, Glu-87, and His-126. His-81, His-83, Glu-87, and His-126 together coordinate Ni(2+).

Belongs to the acireductone dioxygenase (ARD) family. Fe(2+) serves as cofactor. Requires Ni(2+) as cofactor.

The protein localises to the cytoplasm. It localises to the nucleus. The enzyme catalyses 1,2-dihydroxy-5-(methylsulfanyl)pent-1-en-3-one + O2 = 4-methylsulfanyl-2-oxobutanoate + formate + 2 H(+). It catalyses the reaction 1,2-dihydroxy-5-(methylsulfanyl)pent-1-en-3-one + O2 = 3-(methylsulfanyl)propanoate + CO + formate + 2 H(+). Its pathway is amino-acid biosynthesis; L-methionine biosynthesis via salvage pathway; L-methionine from S-methyl-5-thio-alpha-D-ribose 1-phosphate: step 5/6. Functionally, catalyzes 2 different reactions between oxygen and the acireductone 1,2-dihydroxy-3-keto-5-methylthiopentene (DHK-MTPene) depending upon the metal bound in the active site. Fe-containing acireductone dioxygenase (Fe-ARD) produces formate and 2-keto-4-methylthiobutyrate (KMTB), the alpha-ketoacid precursor of methionine in the methionine recycle pathway. Ni-containing acireductone dioxygenase (Ni-ARD) produces methylthiopropionate, carbon monoxide and formate, and does not lie on the methionine recycle pathway. The polypeptide is Acireductone dioxygenase (Metarhizium robertsii (strain ARSEF 23 / ATCC MYA-3075) (Metarhizium anisopliae (strain ARSEF 23))).